A 309-amino-acid chain; its full sequence is Sulfate adenylyltransferase subunit 2 (309 aa).

The protein belongs to the PAPS reductase family. CysD subfamily. Heterodimer composed of CysD, the smaller subunit, and CysN.

It carries out the reaction sulfate + ATP + H(+) = adenosine 5'-phosphosulfate + diphosphate. Its pathway is sulfur metabolism; hydrogen sulfide biosynthesis; sulfite from sulfate: step 1/3. In terms of biological role, with CysN forms the ATP sulfurylase (ATPS) that catalyzes the adenylation of sulfate producing adenosine 5'-phosphosulfate (APS) and diphosphate, the first enzymatic step in sulfur assimilation pathway. APS synthesis involves the formation of a high-energy phosphoric-sulfuric acid anhydride bond driven by GTP hydrolysis by CysN coupled to ATP hydrolysis by CysD. The chain is Sulfate adenylyltransferase subunit 2 from Mycobacterium sp. (strain KMS).